The following is a 702-amino-acid chain: Transposon Tn7 transposition protein TnsB (702 aa).

The tract at residues 1-139 (MWQINEVVLF…GQTPNALIPD (139 aa)) is DNA-binding domain 1 (DBD1). A DNA-binding region (H-T-H motif) is located at residues 105-124 (VEHVVQEHKVTKATVYKLLR). Residues 137-160 (IPDYKNSGAPGERRSATGTAKIGR) form a disordered region. The linker 1 stretch occupies residues 140 to 172 (YKNSGAPGERRSATGTAKIGRAREYGKGEGTKV). A DNA-binding domain 2 (DBD2) region spans residues 173–233 (TPEIERLFRL…QFRYFYDREY (61 aa)). The linker 2 stretch occupies residues 234–267 (PKAQRLKSRVKAGVYKKDVRPLSSTATSQALGPG). The Integrase catalytic domain maps to 262–480 (QALGPGSRYE…IPVQLWQWGM (219 aa)). Positions 268–582 (SRYEIDATIA…RSRQFKGLSF (315 aa)) are catalytic domain (CD). The segment at 589–702 (QAQEKHNKAN…FQDPPEKDES (114 aa)) is C-terminal domain. Residues 623-702 (KLTPSTTEPK…FQDPPEKDES (80 aa)) are disordered.

As to quaternary structure, heteromer with TnsA.

Sequence-specific, DNA-binding protein required for Tn7 transposition. Recognizes sequences necessary for recombination at both left and right ends of Tn7 and, together with TnsA, forms the transposase. TnsB executes the 3'-DNA strand breakage and joining reactions. TnsB binding introduces DNA bending. There are 3 DNA-binding sites in the left and 4 in the right end of Tn7; as TnsB levels increase more TnsB is bound, suggesting high protein levels contribute to transposon immunity. Binding of TnsB to the transposon right end represses expression of the downstream transposition genes. TnsABC + TnsD promote high-frequency insertion of Tn7 into a specific target site known as att-Tn7 whereas TnsABC + TnsE promote low-frequency insertion into many different sites. In Escherichia coli, this protein is Transposon Tn7 transposition protein TnsB.